The primary structure comprises 101 residues: Olivetolic acid cyclase (101 aa).

Residues 3 to 97 (VKHLIVLKFK…FWEKLLIFDY (95 aa)) enclose the Stress-response A/B barrel domain. His-5 contacts 3,5,7-trioxododecanoyl-CoA. Residues Val-31, Ile-34, and Met-37 each coordinate Mg(2+). Tyr-72 contributes to the 3,5,7-trioxododecanoyl-CoA binding site. Active-site acid/base catalyst residues include Tyr-72 and His-75.

Homodimer. As to expression, expressed in glandular trichomes and at lower levels in female flowers.

Its subcellular location is the cytoplasm. It catalyses the reaction 3,5,7-trioxododecanoyl-CoA = olivetolate + CoA + H(+). The protein operates within secondary metabolite biosynthesis; terpenoid biosynthesis. Involved in the biosynthesis of cannabinoids-related terpenophenolic natural products, which have pharmacological activity. Polyketide cyclase which functions in concert with OLS/TKS to form olivetolic acid. Has no intrinsic polyketide synthase activity and requires the presence of OLS to produce olivetolic acid. This chain is Olivetolic acid cyclase, found in Cannabis sativa (Hemp).